Reading from the N-terminus, the 335-residue chain is DNA-directed RNA polymerase subunit alpha (335 aa).

Residues 1 to 231 form an alpha N-terminal domain (alpha-NTD) region; it reads MVREKITVST…DLLIPFLHTK (231 aa). An alpha C-terminal domain (alpha-CTD) region spans residues 263-335; sequence KKMALKSIFI…FVIDLPKNKF (73 aa).

The protein belongs to the RNA polymerase alpha chain family. As to quaternary structure, in plastids the minimal PEP RNA polymerase catalytic core is composed of four subunits: alpha, beta, beta', and beta''. When a (nuclear-encoded) sigma factor is associated with the core the holoenzyme is formed, which can initiate transcription.

It is found in the plastid. The protein localises to the chloroplast. The catalysed reaction is RNA(n) + a ribonucleoside 5'-triphosphate = RNA(n+1) + diphosphate. Functionally, DNA-dependent RNA polymerase catalyzes the transcription of DNA into RNA using the four ribonucleoside triphosphates as substrates. The protein is DNA-directed RNA polymerase subunit alpha of Helianthus annuus (Common sunflower).